A 255-amino-acid polypeptide reads, in one-letter code: 1-(5-phosphoribosyl)-5-[(5-phosphoribosylamino)methylideneamino] imidazole-4-carboxamide isomerase (255 aa).

The Proton acceptor role is filled by aspartate 8. Aspartate 129 serves as the catalytic Proton donor.

Belongs to the HisA/HisF family.

It is found in the cytoplasm. The enzyme catalyses 1-(5-phospho-beta-D-ribosyl)-5-[(5-phospho-beta-D-ribosylamino)methylideneamino]imidazole-4-carboxamide = 5-[(5-phospho-1-deoxy-D-ribulos-1-ylimino)methylamino]-1-(5-phospho-beta-D-ribosyl)imidazole-4-carboxamide. Its pathway is amino-acid biosynthesis; L-histidine biosynthesis; L-histidine from 5-phospho-alpha-D-ribose 1-diphosphate: step 4/9. The chain is 1-(5-phosphoribosyl)-5-[(5-phosphoribosylamino)methylideneamino] imidazole-4-carboxamide isomerase from Prochlorococcus marinus (strain MIT 9301).